Reading from the N-terminus, the 357-residue chain is Putative RING-H2 finger protein ATL37 (357 aa).

Positions 1 to 31 are cleaved as a signal peptide; that stretch reads MTIFTRDFSHRILACVLLPLFLFQCLPYVTC. Residues 47–67 form a helical membrane-spanning segment; it reads SSIIGIVLLSLFLLLLVVYCL. Residues 120 to 162 form an RING-type; atypical zinc finger; the sequence is CAICLCEFEDEEPLRWMPPCSHTFHANCIDEWLSSRSTCPVCR. Residues 172-210 form a disordered region; the sequence is SFPHPSMDVETGNAQRGVQESPDERSLTGSSVTCNNNAN. Residues 198–210 are compositionally biased toward polar residues; it reads LTGSSVTCNNNAN. Serine 273 is modified (phosphoserine). Disordered regions lie at residues 281-304 and 327-357; these read RSSRQGYRSGSVGNERTGFSQGRQ and LDRDNLMRETSQANDKDFGERSFQRLMPEKN. Positions 283 to 304 are enriched in polar residues; the sequence is SRQGYRSGSVGNERTGFSQGRQ. The span at 340–357 shows a compositional bias: basic and acidic residues; it reads NDKDFGERSFQRLMPEKN.

This sequence belongs to the RING-type zinc finger family. ATL subfamily.

It is found in the membrane. The enzyme catalyses S-ubiquitinyl-[E2 ubiquitin-conjugating enzyme]-L-cysteine + [acceptor protein]-L-lysine = [E2 ubiquitin-conjugating enzyme]-L-cysteine + N(6)-ubiquitinyl-[acceptor protein]-L-lysine.. It participates in protein modification; protein ubiquitination. This Arabidopsis thaliana (Mouse-ear cress) protein is Putative RING-H2 finger protein ATL37 (ATL37).